A 206-amino-acid chain; its full sequence is Uridine kinase (206 aa).

ATP is bound at residue 11–18 (GGSGSGKT).

The protein belongs to the uridine kinase family.

It localises to the cytoplasm. It catalyses the reaction uridine + ATP = UMP + ADP + H(+). The enzyme catalyses cytidine + ATP = CMP + ADP + H(+). The protein operates within pyrimidine metabolism; CTP biosynthesis via salvage pathway; CTP from cytidine: step 1/3. It functions in the pathway pyrimidine metabolism; UMP biosynthesis via salvage pathway; UMP from uridine: step 1/1. The polypeptide is Uridine kinase (Macrococcus caseolyticus (strain JCSC5402) (Macrococcoides caseolyticum)).